Consider the following 308-residue polypeptide: tRNA dimethylallyltransferase (308 aa).

Residue 10–17 coordinates ATP; the sequence is GPTASGKT. 12–17 provides a ligand contact to substrate; it reads TASGKT. Interaction with substrate tRNA regions lie at residues 35–38 and 159–163; these read DSSL and QRIFR.

It belongs to the IPP transferase family. As to quaternary structure, monomer. Mg(2+) serves as cofactor.

The catalysed reaction is adenosine(37) in tRNA + dimethylallyl diphosphate = N(6)-dimethylallyladenosine(37) in tRNA + diphosphate. Its function is as follows. Catalyzes the transfer of a dimethylallyl group onto the adenine at position 37 in tRNAs that read codons beginning with uridine, leading to the formation of N6-(dimethylallyl)adenosine (i(6)A). This Francisella philomiragia subsp. philomiragia (strain ATCC 25017 / CCUG 19701 / FSC 153 / O#319-036) protein is tRNA dimethylallyltransferase.